We begin with the raw amino-acid sequence, 430 residues long: Histidinol dehydrogenase (430 aa).

Ser237, Gln259, and His262 together coordinate substrate. The Zn(2+) site is built by Gln259 and His262. Active-site proton acceptor residues include Glu327 and His328. Positions 328, 361, 415, and 420 each coordinate substrate. Asp361 contributes to the Zn(2+) binding site. Residue His420 participates in Zn(2+) binding.

This sequence belongs to the histidinol dehydrogenase family. Requires Zn(2+) as cofactor.

It catalyses the reaction L-histidinol + 2 NAD(+) + H2O = L-histidine + 2 NADH + 3 H(+). The protein operates within amino-acid biosynthesis; L-histidine biosynthesis; L-histidine from 5-phospho-alpha-D-ribose 1-diphosphate: step 9/9. Its function is as follows. Catalyzes the sequential NAD-dependent oxidations of L-histidinol to L-histidinaldehyde and then to L-histidine. The sequence is that of Histidinol dehydrogenase from Mesorhizobium japonicum (strain LMG 29417 / CECT 9101 / MAFF 303099) (Mesorhizobium loti (strain MAFF 303099)).